The sequence spans 149 residues: Deoxyuridine 5'-triphosphate nucleotidohydrolase (149 aa).

Residues 68-70 (RSG), asparagine 81, 85-87 (TVD), and lysine 95 contribute to the substrate site.

It belongs to the dUTPase family. The cofactor is Mg(2+).

It catalyses the reaction dUTP + H2O = dUMP + diphosphate + H(+). It functions in the pathway pyrimidine metabolism; dUMP biosynthesis; dUMP from dCTP (dUTP route): step 2/2. Its function is as follows. This enzyme is involved in nucleotide metabolism: it produces dUMP, the immediate precursor of thymidine nucleotides and it decreases the intracellular concentration of dUTP so that uracil cannot be incorporated into DNA. In Neorickettsia sennetsu (strain ATCC VR-367 / Miyayama) (Ehrlichia sennetsu), this protein is Deoxyuridine 5'-triphosphate nucleotidohydrolase.